The primary structure comprises 379 residues: Cinnamyl alcohol dehydrogenase 7 (379 aa).

Residues 1-13 (MAPTTTATAAAEQ) are compositionally biased toward low complexity. The segment at 1–21 (MAPTTTATAAAEQAPPPQHTR) is disordered. Cys60 provides a ligand contact to Zn(2+). Ser62 contributes to the NADP(+) binding site. Positions 82, 83, 113, 116, 119, 127, and 185 each coordinate Zn(2+). NADP(+) is bound by residues Thr189, 210–215 (GLGGLG), 233–238 (STSPVK), Thr273, Gly297, and 320–322 (SCM).

The protein belongs to the zinc-containing alcohol dehydrogenase family. Homodimer. Zn(2+) serves as cofactor. As to expression, expressed in roots, first internodes and panicles. Expressed in the vascular bundles and sclerenchyma cells below the epidermis in leaves and stems.

The catalysed reaction is (E)-cinnamyl alcohol + NADP(+) = (E)-cinnamaldehyde + NADPH + H(+). It carries out the reaction (E)-coniferol + NADP(+) = (E)-coniferaldehyde + NADPH + H(+). It catalyses the reaction (E)-sinapyl alcohol + NADP(+) = (E)-sinapaldehyde + NADPH + H(+). The enzyme catalyses (E)-4-coumaroyl alcohol + NADP(+) = (E)-4-coumaraldehyde + NADPH + H(+). The catalysed reaction is (E)-caffeyl alcohol + NADP(+) = (E)-caffeyl aldehyde + NADPH + H(+). The protein operates within aromatic compound metabolism; phenylpropanoid biosynthesis. Its function is as follows. Involved in lignin biosynthesis. May catalyze the final step specific for the production of lignin monomers, like coniferyl alcohol, sinapyl alcohol and 4-coumaryl alcohol. This is Cinnamyl alcohol dehydrogenase 7 from Oryza sativa subsp. japonica (Rice).